Reading from the N-terminus, the 268-residue chain is Aliphatic sulfonates import ATP-binding protein SsuB (268 aa).

The ABC transporter domain occupies 15–236; sequence LAVRNLQKTF…VRGSHRLAAL (222 aa). 47–54 is a binding site for ATP; the sequence is GRSGCGKS.

This sequence belongs to the ABC transporter superfamily. Aliphatic sulfonates importer (TC 3.A.1.17.2) family. The complex is composed of two ATP-binding proteins (SsuB), two transmembrane proteins (SsuC) and a solute-binding protein (SsuA).

Its subcellular location is the cell inner membrane. It carries out the reaction ATP + H2O + aliphatic sulfonate-[sulfonate-binding protein]Side 1 = ADP + phosphate + aliphatic sulfonateSide 2 + [sulfonate-binding protein]Side 1.. Functionally, part of the ABC transporter complex SsuABC involved in aliphatic sulfonates import. Responsible for energy coupling to the transport system. In Pseudomonas fluorescens (strain Pf0-1), this protein is Aliphatic sulfonates import ATP-binding protein SsuB.